The sequence spans 74 residues: Metallothionein-like protein type 2 (74 aa).

This sequence belongs to the metallothionein superfamily. Type 15 family.

Its function is as follows. Metallothioneins have a high content of cysteine residues that bind various heavy metals. The protein is Metallothionein-like protein type 2 of Nicotiana plumbaginifolia (Leadwort-leaved tobacco).